A 415-amino-acid chain; its full sequence is MTTETIQSNANLAPLPPHVPEHLVFDFDMYNPSNLSAGVQEAWAVLQESNVPDLVWTRCNGGHWIATRGQLIREAYEDYRHFSSECPFIPREAGEAYDFIPTSMDPPEQRQFRALANQVVGMPVVDKLENRIQELACSLIESLRPQGQCNFTEDYAEPFPIRIFMLLAGLPEEDIPHLKYLTDQMTRPDGSMTFAEAKEALYDYLIPIIEQRRQKPGTDAISIVANGQVNGRPITSDEAKRMCGLLLVGGLDTVVNFLSFSMEFLAKSPEHRQELIERPERIPAACEELLRRFSLVADGRILTSDYEFHGVQLKKGDQILLPQMLSGLDERENACPMHVDFSRQKVSHTTFGHGSHLCLGQHLARREIIVTLKEWLTRIPDFSIAPGAQIQHKSGIVSGVQALPLVWDPATTKAV.

Position 358 (C358) interacts with heme.

It belongs to the cytochrome P450 family. Heme serves as cofactor.

Its subcellular location is the cytoplasm. It carries out the reaction 2 reduced [2Fe-2S]-[putidaredoxin] + (1R,4R)-camphor + O2 + 2 H(+) = (1R,4R,5R)-5-hydroxycamphor + 2 oxidized [2Fe-2S]-[putidaredoxin] + H2O. It functions in the pathway terpene metabolism; (R)-camphor degradation. In terms of biological role, involved in a camphor oxidation system. This chain is Camphor 5-monooxygenase (camC), found in Pseudomonas putida (Arthrobacter siderocapsulatus).